We begin with the raw amino-acid sequence, 242 residues long: Glutamine transport ATP-binding protein GlnQ (242 aa).

In terms of domain architecture, ABC transporter spans 2-236 (IYFHQVNKYY…PKEERAKVFL (235 aa)). 34 to 41 (GPSGSGKS) contributes to the ATP binding site.

It belongs to the ABC transporter superfamily.

Its subcellular location is the cell membrane. In terms of biological role, part of the binding-protein-dependent transport system for glutamine. Probably responsible for energy coupling to the transport system. In Geobacillus stearothermophilus (Bacillus stearothermophilus), this protein is Glutamine transport ATP-binding protein GlnQ (glnQ).